A 285-amino-acid chain; its full sequence is Phosphoribosylaminoimidazole-succinocarboxamide synthase (285 aa).

It belongs to the SAICAR synthetase family.

It carries out the reaction 5-amino-1-(5-phospho-D-ribosyl)imidazole-4-carboxylate + L-aspartate + ATP = (2S)-2-[5-amino-1-(5-phospho-beta-D-ribosyl)imidazole-4-carboxamido]succinate + ADP + phosphate + 2 H(+). Its pathway is purine metabolism; IMP biosynthesis via de novo pathway; 5-amino-1-(5-phospho-D-ribosyl)imidazole-4-carboxamide from 5-amino-1-(5-phospho-D-ribosyl)imidazole-4-carboxylate: step 1/2. The protein is Phosphoribosylaminoimidazole-succinocarboxamide synthase of Leptospira interrogans serogroup Icterohaemorrhagiae serovar copenhageni (strain Fiocruz L1-130).